We begin with the raw amino-acid sequence, 346 residues long: Phenylalanine--tRNA ligase alpha subunit (346 aa).

A Mg(2+)-binding site is contributed by E259.

Belongs to the class-II aminoacyl-tRNA synthetase family. Phe-tRNA synthetase alpha subunit type 1 subfamily. Tetramer of two alpha and two beta subunits. Mg(2+) is required as a cofactor.

It localises to the cytoplasm. It carries out the reaction tRNA(Phe) + L-phenylalanine + ATP = L-phenylalanyl-tRNA(Phe) + AMP + diphosphate + H(+). This Lactococcus lactis subsp. lactis (strain IL1403) (Streptococcus lactis) protein is Phenylalanine--tRNA ligase alpha subunit.